Consider the following 750-residue polypeptide: MAQASRSGSLPPLVIVPPLRAQPGGTGEEQWERSRTGGLRWEVHCWPSGTSGGTPWWPTPADVSEDYEADAAAWRRGPAGGGPIPPALQRLRAVLLRLHREREQLLQARDCAYHLQSAVRLMKTLSPGSPSGGPSPLPQWCRDLQLHPSQGAVLRIGPGETLEPLLLARPIGLAAQCLEAVIEMQLRALGREPASPGLSSQLAELLFALPAYHTLQRKALSHVPGAARPFPTSRVLRLLTGERGCQVASRLDEALQGSALRDQLRRRCQEEGDLLPGLLGLVGGVAGSASCGLGLGGAGALWSQYWTLLWAACAQSLDLNLGPWRDPRATAQQLSQALGQASLPQECEKELASLCHRLLHQSLIWSWDQGFCQALGSALGGQSSLPTSSGTAELLQQLFPPLLDALREPRLRRIFCQPADPAPVALGLCTLQTTLLWFLGRAQQYLAAWDPASFLLLIQKDLPPLLHEAEALYSLASEESLALEVEQQLGLEIQKLTAQIQLLPEESLSVFSQECHKQAMQGFKLYMPRGRYWRLRLCPEPPSAPSEYAGLVVRTVLEPVLQGLQGLPPQAQAPALGQALTAIVGAWLDHILTHGIRFSLQGALQLKQDFGVVRELLEEEQWSLSPDLRQTLLMLSIFQQLDGALLCLLQQPLPKSQVHRRPPCCCACQEVQTTKLPSSCLNSLESLEPPLQPGTSPAQTGQLQSTLGGRGPSPEGYLVGNQQAWLALRQHQRPRWHLPFFSCLGTSPES.

A disordered region spans residues 1–29; sequence MAQASRSGSLPPLVIVPPLRAQPGGTGEE. Residues 87-110 are a coiled coil; the sequence is ALQRLRAVLLRLHREREQLLQARD. The interval 687 to 714 is disordered; that stretch reads LEPPLQPGTSPAQTGQLQSTLGGRGPSP. Positions 693-707 are enriched in polar residues; that stretch reads PGTSPAQTGQLQSTL.

In Homo sapiens (Human), this protein is Coiled-coil domain-containing protein 142 (CCDC142).